The chain runs to 468 residues: Argininosuccinate lyase (468 aa).

This sequence belongs to the lyase 1 family. Argininosuccinate lyase subfamily.

Its subcellular location is the cytoplasm. It catalyses the reaction 2-(N(omega)-L-arginino)succinate = fumarate + L-arginine. It functions in the pathway amino-acid biosynthesis; L-arginine biosynthesis; L-arginine from L-ornithine and carbamoyl phosphate: step 3/3. This is Argininosuccinate lyase from Paraburkholderia phymatum (strain DSM 17167 / CIP 108236 / LMG 21445 / STM815) (Burkholderia phymatum).